The chain runs to 89 residues: Small ribosomal subunit protein uS19 (89 aa).

It belongs to the universal ribosomal protein uS19 family.

Functionally, protein S19 forms a complex with S13 that binds strongly to the 16S ribosomal RNA. The polypeptide is Small ribosomal subunit protein uS19 (Xylella fastidiosa (strain M23)).